Consider the following 104-residue polypeptide: Nucleoid-associated protein Amuc_1227 (104 aa).

This sequence belongs to the YbaB/EbfC family. Homodimer.

The protein localises to the cytoplasm. Its subcellular location is the nucleoid. Binds to DNA and alters its conformation. May be involved in regulation of gene expression, nucleoid organization and DNA protection. In Akkermansia muciniphila (strain ATCC BAA-835 / DSM 22959 / JCM 33894 / BCRC 81048 / CCUG 64013 / CIP 107961 / Muc), this protein is Nucleoid-associated protein Amuc_1227.